A 305-amino-acid chain; its full sequence is Energy-coupling factor transporter ATP-binding protein EcfA2 (305 aa).

Residues 13 to 262 enclose the ABC transporter domain; that stretch reads LQNVDITFTN…KNLLQELLIE (250 aa). ATP is bound at residue 55–62; that stretch reads GSTGSGKS.

This sequence belongs to the ABC transporter superfamily. Energy-coupling factor EcfA family. As to quaternary structure, forms a stable energy-coupling factor (ECF) transporter complex composed of 2 membrane-embedded substrate-binding proteins (S component), 2 ATP-binding proteins (A component) and 2 transmembrane proteins (T component).

The protein localises to the cell membrane. In terms of biological role, ATP-binding (A) component of a common energy-coupling factor (ECF) ABC-transporter complex. Unlike classic ABC transporters this ECF transporter provides the energy necessary to transport a number of different substrates. The chain is Energy-coupling factor transporter ATP-binding protein EcfA2 from Spiroplasma kunkelii.